The primary structure comprises 298 residues: DDRGK domain-containing protein 1 (298 aa).

The Lumenal segment spans residues 1-2; sequence ME. The helical transmembrane segment at 3-23 threads the bilayer; sequence EIFALIVSMILIVAVIPLFFW. Topologically, residues 24 to 298 are cytoplasmic; it reads KRRRDARSRE…ISGMEEISVS (275 aa). Residues 31–155 are disordered; that stretch reads SREEVAEPPQ…EEEKARQAKE (125 aa). Residues 101-155 show a composition bias toward basic and acidic residues; sequence KRQEREAQRQAEEATRESRNTKQDWYAEMRRKKDEEREAEELKLEEEEKARQAKE.

It belongs to the DDRGK1 family.

Its subcellular location is the endoplasmic reticulum membrane. Its function is as follows. Substrate adapter for ufmylation, the covalent attachment of the ubiquitin-like modifier UFM1 to substrate proteins. In Arabidopsis thaliana (Mouse-ear cress), this protein is DDRGK domain-containing protein 1.